The primary structure comprises 626 residues: Membrane protein insertase YidC (626 aa).

5 helical membrane-spanning segments follow: residues 8 to 28 (LILA…LFPP), 399 to 419 (MGLA…PLAY), 469 to 489 (LPIL…FVTL), 527 to 547 (SIMA…SMWL), and 563 to 583 (IFAW…SGLL).

The protein belongs to the OXA1/ALB3/YidC family. Type 1 subfamily. In terms of assembly, interacts with the Sec translocase complex via SecD. Specifically interacts with transmembrane segments of nascent integral membrane proteins during membrane integration.

It is found in the cell inner membrane. Required for the insertion and/or proper folding and/or complex formation of integral membrane proteins into the membrane. Involved in integration of membrane proteins that insert both dependently and independently of the Sec translocase complex, as well as at least some lipoproteins. Aids folding of multispanning membrane proteins. This chain is Membrane protein insertase YidC, found in Jannaschia sp. (strain CCS1).